A 457-amino-acid polypeptide reads, in one-letter code: Putative purine-cytosine permease YxlA (457 aa).

Transmembrane regions (helical) follow at residues Phe-24–Val-44, Leu-50–Ser-70, Phe-90–Phe-110, Ile-127–Gly-147, Ala-164–Ile-184, Ile-192–Ala-212, Phe-228–Leu-248, Ile-264–Met-284, Ile-316–Asn-336, Phe-341–Val-361, Ile-392–Gly-412, and Gly-420–Met-440.

This sequence belongs to the purine-cytosine permease (2.A.39) family.

The protein localises to the cell membrane. This is Putative purine-cytosine permease YxlA (yxlA) from Bacillus subtilis (strain 168).